Reading from the N-terminus, the 310-residue chain is Nodulation protein D 1 (310 aa).

Positions Leu6 to Thr63 constitute an HTH lysR-type domain. Residues Leu23–Ala42 constitute a DNA-binding region (H-T-H motif).

The protein belongs to the LysR transcriptional regulatory family.

Functionally, nodD regulates the expression of the nodABCFE genes which encode other nodulation proteins. NodD is also a negative regulator of its own expression. Binds flavonoids as inducers. This is Nodulation protein D 1 (nodD1) from Neorhizobium galegae (Rhizobium galegae).